A 147-amino-acid polypeptide reads, in one-letter code: Ubiquitin-conjugating enzyme E2 4 (147 aa).

Positions 1-147 constitute a UBC core domain; the sequence is MSLKRINKEL…AKEWTKKYAV (147 aa). The active-site Glycyl thioester intermediate is the C85.

Belongs to the ubiquitin-conjugating enzyme family.

The enzyme catalyses S-ubiquitinyl-[E1 ubiquitin-activating enzyme]-L-cysteine + [E2 ubiquitin-conjugating enzyme]-L-cysteine = [E1 ubiquitin-activating enzyme]-L-cysteine + S-ubiquitinyl-[E2 ubiquitin-conjugating enzyme]-L-cysteine.. Its pathway is protein modification; protein ubiquitination. Functionally, E2 ubiquitin-conjugating enzyme that catalyzes the covalent attachment of ubiquitin to other proteins. Mediates the selective degradation of short-lived and abnormal proteins. Mediates ubiquitination of PEX5. This chain is Ubiquitin-conjugating enzyme E2 4 (UBC4), found in Candida albicans (Yeast).